Here is a 504-residue protein sequence, read N- to C-terminus: Pup--protein ligase (504 aa).

Glutamate 30 provides a ligand contact to Mg(2+). Arginine 74 contributes to the ATP binding site. Position 76 (tyrosine 76) interacts with Mg(2+). Aspartate 78 functions as the Proton acceptor in the catalytic mechanism. Glutamate 84 lines the Mg(2+) pocket. ATP-binding residues include threonine 87 and tryptophan 459.

It belongs to the Pup ligase/Pup deamidase family. Pup-conjugating enzyme subfamily.

The catalysed reaction is ATP + [prokaryotic ubiquitin-like protein]-L-glutamate + [protein]-L-lysine = ADP + phosphate + N(6)-([prokaryotic ubiquitin-like protein]-gamma-L-glutamyl)-[protein]-L-lysine.. It participates in protein degradation; proteasomal Pup-dependent pathway. It functions in the pathway protein modification; protein pupylation. Its function is as follows. Catalyzes the covalent attachment of the prokaryotic ubiquitin-like protein modifier Pup to the proteasomal substrate proteins, thereby targeting them for proteasomal degradation. This tagging system is termed pupylation. The ligation reaction involves the side-chain carboxylate of the C-terminal glutamate of Pup and the side-chain amino group of a substrate lysine. This chain is Pup--protein ligase, found in Corynebacterium urealyticum (strain ATCC 43042 / DSM 7109).